A 481-amino-acid chain; its full sequence is Glutamyl-tRNA(Gln) amidotransferase subunit A (481 aa).

Active-site charge relay system residues include K74 and S149. The Acyl-ester intermediate role is filled by S173.

It belongs to the amidase family. GatA subfamily. Heterotrimer of A, B and C subunits.

The enzyme catalyses L-glutamyl-tRNA(Gln) + L-glutamine + ATP + H2O = L-glutaminyl-tRNA(Gln) + L-glutamate + ADP + phosphate + H(+). Functionally, allows the formation of correctly charged Gln-tRNA(Gln) through the transamidation of misacylated Glu-tRNA(Gln) in organisms which lack glutaminyl-tRNA synthetase. The reaction takes place in the presence of glutamine and ATP through an activated gamma-phospho-Glu-tRNA(Gln). The chain is Glutamyl-tRNA(Gln) amidotransferase subunit A from Francisella tularensis subsp. tularensis (strain FSC 198).